The following is a 59-amino-acid chain: Photosystem II reaction center protein K (59 aa).

A propeptide spanning residues 1–22 is cleaved from the precursor; it reads MLNIFSLICLSSALHSSSFFFA. A helical membrane pass occupies residues 38–58; that stretch reads MPVIPVLFFLLALVWQAAVSF.

The protein belongs to the PsbK family. In terms of assembly, PSII is composed of 1 copy each of membrane proteins PsbA, PsbB, PsbC, PsbD, PsbE, PsbF, PsbH, PsbI, PsbJ, PsbK, PsbL, PsbM, PsbT, PsbX, PsbY, PsbZ, Psb30/Ycf12, at least 3 peripheral proteins of the oxygen-evolving complex and a large number of cofactors. It forms dimeric complexes.

It localises to the plastid. The protein resides in the chloroplast thylakoid membrane. Its function is as follows. One of the components of the core complex of photosystem II (PSII). PSII is a light-driven water:plastoquinone oxidoreductase that uses light energy to abstract electrons from H(2)O, generating O(2) and a proton gradient subsequently used for ATP formation. It consists of a core antenna complex that captures photons, and an electron transfer chain that converts photonic excitation into a charge separation. The polypeptide is Photosystem II reaction center protein K (Piper cenocladum (Ant piper)).